The following is a 1253-amino-acid chain: Cytoplasmic FMR1-interacting protein 1 (1253 aa).

The residue at position 583 (serine 583) is a Phosphoserine. Threonine 1234 carries the post-translational modification Phosphothreonine.

The protein belongs to the CYFIP family. In terms of assembly, component of the WAVE1 complex composed of ABI2, CYFIP1 or CYFIP2, BRK1, NCKAP1 and WASF1/WAVE1. Within the complex, a heterodimer containing NCKAP1 and CYFIP1 interacts with a heterotrimer formed by WAVE1, ABI2 and BRK1. Component of the CYFIP1-EIF4E-FMR1 complex which is composed of CYFIP, EIF4E and FMR1. Interacts with FMR1 but does not bind to related proteins FXR1 or FXR2. Interaction with EIF4E stimulates FMR1 binding. Component of the WAVE2 complex composed of ABI1, CYFIP1/SRA1, NCKAP1/NAP1 (NCKAP1l/HEM1 in hematopoietic cells) and WASF2/WAVE2. Interacts with the active GTP-bound form of RAC1. Interacts through its C-terminus with the C-terminus of DPYSL2/CRMP2 which is necessary for DPYSL2-induced axon outgrowth. Interacts with NYAP1, NYAP2 and MYO16. Interacts with TMEM108 (via N-terminus); the interaction associates TMEM108 with the WAVE1 complex.

The protein resides in the cytoplasm. It is found in the perinuclear region. It localises to the cell projection. The protein localises to the lamellipodium. Its subcellular location is the ruffle. The protein resides in the synapse. It is found in the synaptosome. Its function is as follows. Component of the CYFIP1-EIF4E-FMR1 complex which binds to the mRNA cap and mediates translational repression. In the CYFIP1-EIF4E-FMR1 complex this subunit is an adapter between EIF4E and FMR1. Promotes the translation repression activity of FMR1 in brain probably by mediating its association with EIF4E and mRNA. Regulates formation of membrane ruffles and lamellipodia. Plays a role in axon outgrowth. Binds to F-actin but not to RNA. Part of the WAVE complex that regulates actin filament reorganization via its interaction with the Arp2/3 complex. Actin remodeling activity is regulated by RAC1. Regulator of epithelial morphogenesis. As component of the WAVE1 complex, required for BDNF-NTRK2 endocytic trafficking and signaling from early endosomes. May act as an invasion suppressor in cancers. This chain is Cytoplasmic FMR1-interacting protein 1, found in Homo sapiens (Human).